The chain runs to 291 residues: ATP phosphoribosyltransferase (291 aa).

It belongs to the ATP phosphoribosyltransferase family. Long subfamily. It depends on Mg(2+) as a cofactor.

The protein resides in the cytoplasm. The enzyme catalyses 1-(5-phospho-beta-D-ribosyl)-ATP + diphosphate = 5-phospho-alpha-D-ribose 1-diphosphate + ATP. It participates in amino-acid biosynthesis; L-histidine biosynthesis; L-histidine from 5-phospho-alpha-D-ribose 1-diphosphate: step 1/9. With respect to regulation, feedback inhibited by histidine. In terms of biological role, catalyzes the condensation of ATP and 5-phosphoribose 1-diphosphate to form N'-(5'-phosphoribosyl)-ATP (PR-ATP). Has a crucial role in the pathway because the rate of histidine biosynthesis seems to be controlled primarily by regulation of HisG enzymatic activity. The chain is ATP phosphoribosyltransferase from Trichlorobacter lovleyi (strain ATCC BAA-1151 / DSM 17278 / SZ) (Geobacter lovleyi).